The following is a 136-amino-acid chain: Interleukin-13 (136 aa).

The first 18 residues, 1 to 18, serve as a signal peptide directing secretion; it reads MALWLTVVIAFTCIGGLA. N-linked (GlcNAc...) asparagine glycosylation is found at Asn38, Asn49, Asn57, Asn72, Asn75, and Asn131. 2 cysteine pairs are disulfide-bonded: Cys48–Cys76 and Cys64–Cys90.

It belongs to the IL-4/IL-13 family. In terms of assembly, interacts with IL13RA2.

The protein localises to the secreted. Its function is as follows. Cytokine that plays important roles in allergic inflammation and immune response to parasite infection. Synergizes with IL2 in regulating interferon-gamma synthesis. Stimulates B-cell proliferation, and activation of eosinophils, basophils, and mast cells. Plays an important role in controlling IL33 activity by modulating the production of transmembrane and soluble forms of interleukin-1 receptor-like 1/IL1RL1. Displays the capacity to antagonize Th1-driven proinflammatory immune response and downregulates synthesis of many proinflammatory cytokines including IL1, IL6, IL10, IL12 and TNF-alpha through a mechanism that partially involves suppression of NF-kappa-B. Also functions on nonhematopoietic cells, including endothelial cells where it induces vascular cell adhesion protein 1/VCAM1, which is important in the recruitment of eosinophils. Exerts its biological effects through its receptors which comprises the IL4R chain and the IL13RA1 chain, to activate JAK1 and TYK2, leading to the activation of STAT6. Aside from IL13RA1, another receptor IL13RA2 acts as a high affinity decoy for IL13 and mediates internalization and depletion of extracellular IL13. This chain is Interleukin-13 (IL13), found in Camelus bactrianus (Bactrian camel).